We begin with the raw amino-acid sequence, 406 residues long: Imidazolonepropionase (406 aa).

Residues His74 and His76 each contribute to the Fe(3+) site. His74 and His76 together coordinate Zn(2+). Residues Arg83, Tyr146, and His179 each contribute to the 4-imidazolone-5-propanoate site. Residue Tyr146 coordinates N-formimidoyl-L-glutamate. Residue His240 coordinates Fe(3+). Position 240 (His240) interacts with Zn(2+). A 4-imidazolone-5-propanoate-binding site is contributed by Glu243. Asp314 is a binding site for Fe(3+). A Zn(2+)-binding site is contributed by Asp314. Asn316 and Gly318 together coordinate N-formimidoyl-L-glutamate. Ser319 lines the 4-imidazolone-5-propanoate pocket.

The protein belongs to the metallo-dependent hydrolases superfamily. HutI family. Requires Zn(2+) as cofactor. It depends on Fe(3+) as a cofactor.

The protein localises to the cytoplasm. The catalysed reaction is 4-imidazolone-5-propanoate + H2O = N-formimidoyl-L-glutamate. Its pathway is amino-acid degradation; L-histidine degradation into L-glutamate; N-formimidoyl-L-glutamate from L-histidine: step 3/3. Functionally, catalyzes the hydrolytic cleavage of the carbon-nitrogen bond in imidazolone-5-propanoate to yield N-formimidoyl-L-glutamate. It is the third step in the universal histidine degradation pathway. In Kosmotoga olearia (strain ATCC BAA-1733 / DSM 21960 / TBF 19.5.1), this protein is Imidazolonepropionase.